The primary structure comprises 494 residues: Ketol-acid reductoisomerase (NADP(+)) (494 aa).

The region spanning L14–S208 is the KARI N-terminal Rossmann domain. NADP(+) is bound by residues C45–Q48, R68, R76, S78, and D108–Q110. The active site involves H132. G158 contributes to the NADP(+) binding site. KARI C-terminal knotted domains follow at residues S209–A344 and F345–M487. D217, E221, E389, and E393 together coordinate Mg(2+). S414 provides a ligand contact to substrate.

Belongs to the ketol-acid reductoisomerase family. It depends on Mg(2+) as a cofactor.

It carries out the reaction (2R)-2,3-dihydroxy-3-methylbutanoate + NADP(+) = (2S)-2-acetolactate + NADPH + H(+). The enzyme catalyses (2R,3R)-2,3-dihydroxy-3-methylpentanoate + NADP(+) = (S)-2-ethyl-2-hydroxy-3-oxobutanoate + NADPH + H(+). Its pathway is amino-acid biosynthesis; L-isoleucine biosynthesis; L-isoleucine from 2-oxobutanoate: step 2/4. It participates in amino-acid biosynthesis; L-valine biosynthesis; L-valine from pyruvate: step 2/4. In terms of biological role, involved in the biosynthesis of branched-chain amino acids (BCAA). Catalyzes an alkyl-migration followed by a ketol-acid reduction of (S)-2-acetolactate (S2AL) to yield (R)-2,3-dihydroxy-isovalerate. In the isomerase reaction, S2AL is rearranged via a Mg-dependent methyl migration to produce 3-hydroxy-3-methyl-2-ketobutyrate (HMKB). In the reductase reaction, this 2-ketoacid undergoes a metal-dependent reduction by NADPH to yield (R)-2,3-dihydroxy-isovalerate. The sequence is that of Ketol-acid reductoisomerase (NADP(+)) from Tolumonas auensis (strain DSM 9187 / NBRC 110442 / TA 4).